A 946-amino-acid chain; its full sequence is Nonribosomal peptide synthetase pngA (946 aa).

An adenylation (A) domain region spans residues 32–450; sequence AIASREPTRY…AGREKDSIIV (419 aa). A Carrier domain is found at 580 to 659; it reads QPRSGLEQSL…TLSDALKQHA (80 aa). Residue Ser-618 is modified to O-(pantetheine 4'-phosphoryl)serine. Residues 681-933 form a thioesterase (TE) domain region; that stretch reads PIWLVHPVGG…ILDAENIFSF (253 aa).

Belongs to the NRP synthetase family.

The catalysed reaction is 2 3-phenylpyruvate + H(+) = phenguignardate + H2O. Functionally, nonribosomal peptide synthetase that mediates the biosynthesis of phenguignardic acid. PngA alone is sufficient for phenguignardic acid synthesis. PngA first activates phenylpyruvic acid (PPA) through its A domain to AMP-PPA. The PPA unit is then loaded to the T domain and eventually transferred to the TE domain. Another PPA unit is then loaded onto the T domain. The TE domain likely promotes the enolate formation on the attached unit, followed by a nucleophilic attack on the carbonyl to yield an ether linkage between the two units. Finally, the TE domain probably catalyzes a similar reaction to give the cyclized dioxolanone core and releases phenguignardic acid. The protein is Nonribosomal peptide synthetase pngA of Aspergillus terreus (strain NIH 2624 / FGSC A1156).